We begin with the raw amino-acid sequence, 1383 residues long: Insulin receptor (1383 aa).

The N-terminal stretch at 1–26 is a signal peptide; it reads MGSGRGCETTAVPLLMAVAVAGGTAG. Extracellular-facing segments span residues 27-759 and 764-957; these read HLYP…TRPS and SLEE…NIAK. A disulfide bridge links C34 with C52. N-linked (GlcNAc...) asparagine glycosylation is found at N42, N51, N104, and N137. 9 cysteine pairs are disulfide-bonded: C152/C181, C185/C208, C195/C214, C218/C227, C222/C233, C234/C242, C238/C251, C254/C263, and C267/C279. N-linked (GlcNAc...) asparagine glycosylation occurs at N241. N-linked (GlcNAc...) asparagine glycosylation occurs at N281. 5 disulfide bridges follow: C285-C310, C292-C300, C314-C327, C330-C334, and C338-C359. N-linked (GlcNAc...) asparagine glycosylation occurs at N321. N363 carries an N-linked (GlcNAc...) asparagine glycan. A Phosphoserine modification is found at S399. Y400 carries the phosphotyrosine modification. Residue S406 is modified to Phosphoserine. 2 N-linked (GlcNAc...) asparagine glycosylation sites follow: N423 and N444. Cysteines 461 and 494 form a disulfide. Residues N540, N634, N652, and N699 are each glycosylated (N-linked (GlcNAc...) asparagine). Residues 625-727 form the Fibronectin type-III 1 domain; sequence VPLDPISVSN…SQILKELEES (103 aa). C675 and C900 are oxidised to a cystine. Residues 687–709 form a disordered region; it reads SPPFESDDSQKHNQSEYDDSASE. Positions 734 to 742 are insulin-binding; sequence EDYLHNVVF. A disordered region spans residues 747 to 783; sequence TSSGNGAEDTRPSRKRRSLEEVGNVTATTPTLPDFPN. Fibronectin type-III domains lie at 754–848 and 854–948; these read EDTR…TMPE and IVGP…VTDY. N770, N783, N921, and N934 each carry an N-linked (GlcNAc...) asparagine glycan. The span at 771-783 shows a compositional bias: polar residues; it reads VTATTPTLPDFPN. A helical membrane pass occupies residues 958-978; that stretch reads IIIGPLIFVFLFSVVIGSIYL. The Cytoplasmic segment spans residues 979 to 1383; that stretch reads FLRKRQPDGP…VLTLPRSNPS (405 aa). The tract at residues 997–1000 is important for interaction with IRS1, SHC1 and STAT5B; it reads NPEY. The residue at position 1000 (Y1000) is a Phosphotyrosine; by autocatalysis. The 276-residue stretch at 1024-1299 folds into the Protein kinase domain; the sequence is ITLLRELGQG…LLKDDLHPSF (276 aa). 2 residues coordinate ATP: S1034 and K1058. K1080 is covalently cross-linked (Glycyl lysine isopeptide (Lys-Gly) (interchain with G-Cter in ubiquitin)). C1084 is modified (S-nitrosocysteine). 1105–1111 is a binding site for ATP; that stretch reads ELMAHGD. The active-site Proton donor/acceptor is D1160. ATP is bound by residues 1164 to 1165 and D1178; that span reads RN. Residues Y1186, Y1190, Y1191, Y1356, and Y1362 each carry the phosphotyrosine; by autocatalysis modification. The tract at residues 1361–1383 is disordered; the sequence is PYTHMNGGKKNGRVLTLPRSNPS. The tract at residues 1362 to 1365 is PIK3R1 binding; the sequence is YTHM.

Belongs to the protein kinase superfamily. Tyr protein kinase family. Insulin receptor subfamily. Tetramer of 2 alpha and 2 beta chains linked by disulfide bonds. The alpha chains carry the insulin-binding regions, while the beta chains carry the kinase domain. Forms a hybrid receptor with IGF1R, the hybrid is a tetramer consisting of 1 alpha chain and 1 beta chain of INSR and 1 alpha chain and 1 beta chain of IGF1R. Interacts with SORBS1 but dissociates from it following insulin stimulation. Binds SH2B2. Activated form of INSR interacts (via Tyr-1000) with the PTB/PID domains of IRS1 and SHC1. The sequences surrounding the phosphorylated NPXY motif contribute differentially to either IRS1 or SHC1 recognition. Interacts (via tyrosines in the C-terminus) with IRS2 (via PTB domain and 591-786 AA); the 591-786 would be the primary anchor of IRS2 to INSR while the PTB domain would have a stabilizing action on the interaction with INSR. Interacts with the SH2 domains of the 85 kDa regulatory subunit of PI3K (PIK3R1) in vitro, when autophosphorylated on tyrosine residues. Interacts with SOCS7. Interacts (via the phosphorylated Tyr-1000), with SOCS3. Interacts (via the phosphorylated Tyr-1186, Tyr-1190, Tyr-1191) with SOCS1. Interacts with ARRB2. Interacts with GRB10; this interaction blocks the association between IRS1/IRS2 and INSR, significantly reduces insulin-stimulated tyrosine phosphorylation of IRS1 and IRS2 and thus decreases insulin signaling. Interacts with PDPK1. Interacts (via Tyr-1191) with GRB14 (via BPS domain); this interaction protects the tyrosines in the activation loop from dephosphorylation, but promotes dephosphorylation of Tyr-1000, this results in decreased interaction with, and phosphorylation of, IRS1. Interacts (via subunit alpha) with ENPP1 (via 485-599 AA); this interaction blocks autophosphorylation. Interacts with PTPRE; this interaction is dependent of Tyr-1186, Tyr-1190 and Tyr-1191 of the INSR. Interacts with STAT5B (via SH2 domain). Interacts with PTPRF. Interacts with GRB7. Interacts with CAV2 (tyrosine-phosphorylated form); the interaction is increased with 'Tyr-27'phosphorylation of CAV2. Interacts with ATIC; ATIC together with PRKAA2/AMPK2 and HACD3/PTPLAD1 is proposed to be part of a signaling netwok regulating INSR autophosphorylation and endocytosis. Interacts with the insulin receptor SORL1; this interaction strongly increases its surface exposure, hence strengthens insulin signal reception. Interacts (tyrosine phosphorylated) with CCDC88A/GIV (via SH2-like region); binding requires autophosphorylation of the Insr C-terminal region. Interacts with GNAI3; the interaction is probably mediated by CCDC88A/GIV. Interacts with LMBRD1. Interacts (in response to insulin stimulation) with NCK1; this interaction may recruit PTPN1 to mediate INSR dephosphorylation. Interacts with CD248; this interaction diminishes INSR autophosphorylation. Post-translationally, after being transported from the endoplasmic reticulum to the Golgi apparatus, the single glycosylated precursor is further glycosylated and then cleaved, followed by its transport to the plasma membrane. In terms of processing, autophosphorylated on tyrosine residues in response to insulin. Phosphorylation of Tyr-1000 is required for binding to IRS1, SHC1 and STAT5B. May also be phosphorylated at Tyr-1186 and Tyr-1191 by mTORC2. Dephosphorylated by PTPRE at Tyr-1000, Tyr-1186, Tyr-1190 and Tyr-1191. Dephosphorylated by PTPRF and PTPN1. Dephosphorylated by PTPN2; down-regulates insulin-induced signaling. S-nitrosylation at Cys-1084 by BLVRB inhibits the receptor tyrosine kinase, thereby inhibiting insulin signaling. Post-translationally, ubiquitinated by MARCHF1; leading to degradation thereby reducing surface INSR expression.

Its subcellular location is the cell membrane. It is found in the late endosome. The protein localises to the lysosome. It carries out the reaction L-tyrosyl-[protein] + ATP = O-phospho-L-tyrosyl-[protein] + ADP + H(+). Its activity is regulated as follows. Activated in response to insulin. Autophosphorylation activates the kinase activity. PTPN1, PTPRE and PTPRF dephosphorylate important tyrosine residues, thereby reducing INSR activity. Inhibited by ENPP1. GRB10 and GRB14 inhibit the catalytic activity of the INSR, they block access of substrates to the activated receptor. SOCS1 and SOCS3 act as negative regulators of INSR activity, they bind to the activated INRS and interfere with the phosphorylation of INSR substrates. Functionally, receptor tyrosine kinase which mediates the pleiotropic actions of insulin. Binding of insulin leads to phosphorylation of several intracellular substrates, including, insulin receptor substrates (IRS1, 2, 3, 4), SHC, GAB1, CBL and other signaling intermediates. Each of these phosphorylated proteins serve as docking proteins for other signaling proteins that contain Src-homology-2 domains (SH2 domain) that specifically recognize different phosphotyrosine residues, including the p85 regulatory subunit of PI3K and SHP2. Phosphorylation of IRSs proteins lead to the activation of two main signaling pathways: the PI3K-AKT/PKB pathway, which is responsible for most of the metabolic actions of insulin, and the Ras-MAPK pathway, which regulates expression of some genes and cooperates with the PI3K pathway to control cell growth and differentiation. Binding of the SH2 domains of PI3K to phosphotyrosines on IRS1 leads to the activation of PI3K and the generation of phosphatidylinositol-(3, 4, 5)-triphosphate (PIP3), a lipid second messenger, which activates several PIP3-dependent serine/threonine kinases, such as PDPK1 and subsequently AKT/PKB. The net effect of this pathway is to produce a translocation of the glucose transporter SLC2A4/GLUT4 from cytoplasmic vesicles to the cell membrane to facilitate glucose transport. Moreover, upon insulin stimulation, activated AKT/PKB is responsible for: anti-apoptotic effect of insulin by inducing phosphorylation of BAD; regulates the expression of gluconeogenic and lipogenic enzymes by controlling the activity of the winged helix or forkhead (FOX) class of transcription factors. Another pathway regulated by PI3K-AKT/PKB activation is mTORC1 signaling pathway which regulates cell growth and metabolism and integrates signals from insulin. AKT mediates insulin-stimulated protein synthesis by phosphorylating TSC2 thereby activating mTORC1 pathway. The Ras/RAF/MAP2K/MAPK pathway is mainly involved in mediating cell growth, survival and cellular differentiation of insulin. Phosphorylated IRS1 recruits GRB2/SOS complex, which triggers the activation of the Ras/RAF/MAP2K/MAPK pathway. In addition to binding insulin, the insulin receptor can bind insulin-like growth factors (IGFI and IGFII). When present in a hybrid receptor with IGF1R, binds IGF1. In adipocytes, inhibits lipolysis. The chain is Insulin receptor (Insr) from Rattus norvegicus (Rat).